The sequence spans 292 residues: Protein/nucleic acid deglycase HchA (292 aa).

The span at 1–12 (MSQDVNELSKQP) shows a compositional bias: polar residues. The segment at 1–23 (MSQDVNELSKQPTPDKAEDNAFF) is disordered. Cys190 functions as the Nucleophile in the catalytic mechanism.

Belongs to the peptidase C56 family. HchA subfamily.

The protein localises to the cytoplasm. It catalyses the reaction N(omega)-(1-hydroxy-2-oxopropyl)-L-arginyl-[protein] + H2O = lactate + L-arginyl-[protein] + H(+). The catalysed reaction is N(6)-(1-hydroxy-2-oxopropyl)-L-lysyl-[protein] + H2O = lactate + L-lysyl-[protein] + H(+). It carries out the reaction S-(1-hydroxy-2-oxopropyl)-L-cysteinyl-[protein] + H2O = lactate + L-cysteinyl-[protein] + H(+). The enzyme catalyses N(omega)-(1-hydroxy-2-oxoethyl)-L-arginyl-[protein] + H2O = L-arginyl-[protein] + glycolate + H(+). It catalyses the reaction N(6)-(1-hydroxy-2-oxoethyl)-L-lysyl-[protein] + H2O = glycolate + L-lysyl-[protein] + H(+). The catalysed reaction is S-(1-hydroxy-2-oxoethyl)-L-cysteinyl-[protein] + H2O = glycolate + L-cysteinyl-[protein] + H(+). It carries out the reaction N(2)-(1-hydroxy-2-oxopropyl)-dGTP + H2O = lactate + dGTP + H(+). The enzyme catalyses N(2)-(1-hydroxy-2-oxopropyl)-GTP + H2O = lactate + GTP + H(+). It catalyses the reaction N(2)-(1-hydroxy-2-oxopropyl)-GDP + H2O = lactate + GDP + H(+). The catalysed reaction is N(2)-(1-hydroxy-2-oxopropyl)-GMP + H2O = lactate + GMP + H(+). It carries out the reaction N(2)-(1-hydroxy-2-oxoethyl)-dGTP + H2O = dGTP + glycolate + H(+). The enzyme catalyses N(2)-(1-hydroxy-2-oxoethyl)-GTP + H2O = glycolate + GTP + H(+). It catalyses the reaction N(2)-(1-hydroxy-2-oxoethyl)-GDP + H2O = glycolate + GDP + H(+). The catalysed reaction is N(2)-(1-hydroxy-2-oxoethyl)-GMP + H2O = glycolate + GMP + H(+). It carries out the reaction an N(2)-(1-hydroxy-2-oxopropyl)-guanosine in RNA + H2O = a guanosine in RNA + lactate + H(+). The enzyme catalyses an N(2)-(1-hydroxy-2-oxopropyl)-2'-deoxyguanosine in DNA + H2O = a 2'-deoxyguanosine in DNA + lactate + H(+). It catalyses the reaction an N(2)-(1-hydroxy-2-oxoethyl)-guanosine in RNA + H2O = a guanosine in RNA + glycolate + H(+). The catalysed reaction is an N(2)-(1-hydroxy-2-oxoethyl)-2'-deoxyguanosine in DNA + H2O = a 2'-deoxyguanosine in DNA + glycolate + H(+). Protein and nucleotide deglycase that catalyzes the deglycation of the Maillard adducts formed between amino groups of proteins or nucleotides and reactive carbonyl groups of glyoxals. Thus, functions as a protein deglycase that repairs methylglyoxal- and glyoxal-glycated proteins, and releases repaired proteins and lactate or glycolate, respectively. Deglycates cysteine, arginine and lysine residues in proteins, and thus reactivates these proteins by reversing glycation by glyoxals. Acts on early glycation intermediates (hemithioacetals and aminocarbinols), preventing the formation of Schiff bases and advanced glycation endproducts (AGE). Also functions as a nucleotide deglycase able to repair glycated guanine in the free nucleotide pool (GTP, GDP, GMP, dGTP) and in DNA and RNA. Is thus involved in a major nucleotide repair system named guanine glycation repair (GG repair), dedicated to reversing methylglyoxal and glyoxal damage via nucleotide sanitization and direct nucleic acid repair. Plays an important role in protecting cells from carbonyl stress. The chain is Protein/nucleic acid deglycase HchA from Staphylococcus aureus (strain bovine RF122 / ET3-1).